A 414-amino-acid polypeptide reads, in one-letter code: Glyceraldehyde-3-phosphate dehydrogenase, chloroplastic (414 aa).

The transit peptide at 1 to 76 (MAFVAPVATV…GIVAATFGPT (76 aa)) directs the protein to the chloroplast. Residues 88–89 (RI), Asp112, and Arg156 contribute to the NADP(+) site. Residues 230–232 (SCT), Thr261, Arg276, 289–290 (TG), and Arg312 contribute to the D-glyceraldehyde 3-phosphate site. The active-site Nucleophile is the Cys231. Asn394 is a binding site for NADP(+).

This sequence belongs to the glyceraldehyde-3-phosphate dehydrogenase family. Homotetramer.

It localises to the plastid. It is found in the chloroplast. The enzyme catalyses D-glyceraldehyde 3-phosphate + phosphate + NADP(+) = (2R)-3-phospho-glyceroyl phosphate + NADPH + H(+). Its pathway is carbohydrate biosynthesis; Calvin cycle. This Chondrus crispus (Carrageen Irish moss) protein is Glyceraldehyde-3-phosphate dehydrogenase, chloroplastic (GAPA).